We begin with the raw amino-acid sequence, 223 residues long: SCMKAAPMKEASIRGQGSLAYPGLRAQGNLETLGGPNDATRGLTSLADTFEHVIEELLDEQQVIQPSKENKDADLYSTRVMLSSQVPLEPPLLFLLEEYKNYLDAANMSMRVRRHSDPARRGELSVCDSTSEWVTAAEKKTAVDMSGATVTVLEKVPVPKGQLKQYFYETKCSLKGYAKEGCRGIDKRYWNSQCRTTQSYVRALTMDNKKRVGWRFIRIDTSC.

The N-terminal stretch at 1–5 (SCMKA) is a signal peptide. Residues 6 to 114 (APMKEASIRG…AANMSMRVRR (109 aa)) constitute a propeptide that is removed on maturation. The N-linked (GlcNAc...) asparagine glycan is linked to Asn107. Intrachain disulfides connect Cys127/Cys194 and Cys172/Cys223.

It belongs to the NGF-beta family.

The protein localises to the secreted. In terms of biological role, promotes the survival of neuronal populations that are all located either in the central nervous system or directly connected to it. The polypeptide is Neurotrophic factor BDNF precursor form (BDNF) (Tropidophis haetianus (Haitian dwarf boa)).